A 485-amino-acid polypeptide reads, in one-letter code: MIYTAIDVGASSGRIMVGELNEGKLDIQEIHRFANGFSQRDGHCLWDIDHLLKQILQGLQKVKTLGYEHCTVGIDTWAVDYVLLDEKGDRLREAISYRDRRTDHTIDKLEHTLSKAAIYQKTGIQFQPFNTIYQLFEEDRELLKKTDKIMMIPDYLGYCLTGKAVTEITNVSTTQLLNVSTGNLDPELLEAVSVLEQQFAPLTEPGCELGKLRNEWFPDYDLPACKVMTVATHDTASAVIAAPGVNDGWAYISSGTWSLIGVENKTPIITDLALENNYTNERGANNTIRFLKNIIGMWVIQEVKQQLQADYSFQQLAEEAKKTEPFQQFINLNDKRFLNPENMIKEIQHYCRQTRQKIPRTAGELACCIYSNLAIIYAIAIKELETITEKPIEQFHIIGGGARNDFLNQLTADMSGKAVYAGPIEATATGNLLMQMIAAKEVKDIKEARQVVRNSFPIKVFTPKDIDRSTIIQSFQQTVLKALSK.

10-14 (ASSGR) lines the ATP pocket. Residues A78 and 233-235 (HDT) contribute to the substrate site. The Proton acceptor role is filled by D234. ATP is bound at residue T256. Residue N293 coordinates substrate. Q301 contacts ATP. C351 and C368 form a disulfide bridge. G400 contributes to the ATP binding site.

It belongs to the rhamnulokinase family. Mg(2+) serves as cofactor.

The catalysed reaction is L-rhamnulose + ATP = L-rhamnulose 1-phosphate + ADP + H(+). It functions in the pathway carbohydrate degradation; L-rhamnose degradation; glycerone phosphate from L-rhamnose: step 2/3. Involved in the catabolism of L-rhamnose (6-deoxy-L-mannose). Catalyzes the transfer of the gamma-phosphate group from ATP to the 1-hydroxyl group of L-rhamnulose to yield L-rhamnulose 1-phosphate. This is Rhamnulokinase from Bacillus subtilis (strain 168).